Consider the following 357-residue polypeptide: Putative RING-H2 finger protein ATL37 (357 aa).

The signal sequence occupies residues 1–31 (MTIFTRDFSHRILACVLLPLFLFQCLPYVTC). A helical transmembrane segment spans residues 47–67 (SSIIGIVLLSLFLLLLVVYCL). The segment at 120-162 (CAICLCEFEDEEPLRWMPPCSHTFHANCIDEWLSSRSTCPVCR) adopts an RING-type; atypical zinc-finger fold. The interval 172 to 210 (SFPHPSMDVETGNAQRGVQESPDERSLTGSSVTCNNNAN) is disordered. Over residues 198-210 (LTGSSVTCNNNAN) the composition is skewed to polar residues. At Ser-273 the chain carries Phosphoserine. Disordered stretches follow at residues 281-304 (RSSR…QGRQ) and 327-357 (LDRD…PEKN). The span at 283–304 (SRQGYRSGSVGNERTGFSQGRQ) shows a compositional bias: polar residues. The span at 340-357 (NDKDFGERSFQRLMPEKN) shows a compositional bias: basic and acidic residues.

Belongs to the RING-type zinc finger family. ATL subfamily.

Its subcellular location is the membrane. It catalyses the reaction S-ubiquitinyl-[E2 ubiquitin-conjugating enzyme]-L-cysteine + [acceptor protein]-L-lysine = [E2 ubiquitin-conjugating enzyme]-L-cysteine + N(6)-ubiquitinyl-[acceptor protein]-L-lysine.. Its pathway is protein modification; protein ubiquitination. In Arabidopsis thaliana (Mouse-ear cress), this protein is Putative RING-H2 finger protein ATL37 (ATL37).